Here is a 421-residue protein sequence, read N- to C-terminus: Enolase (421 aa).

Glutamine 161 lines the (2R)-2-phosphoglycerate pocket. Glutamate 203 serves as the catalytic Proton donor. Mg(2+) contacts are provided by aspartate 240, glutamate 283, and aspartate 310. (2R)-2-phosphoglycerate is bound by residues lysine 335, arginine 364, serine 365, and lysine 386. Lysine 335 (proton acceptor) is an active-site residue.

This sequence belongs to the enolase family. The cofactor is Mg(2+).

Its subcellular location is the cytoplasm. The protein localises to the secreted. It localises to the cell surface. It catalyses the reaction (2R)-2-phosphoglycerate = phosphoenolpyruvate + H2O. Its pathway is carbohydrate degradation; glycolysis; pyruvate from D-glyceraldehyde 3-phosphate: step 4/5. Its function is as follows. Catalyzes the reversible conversion of 2-phosphoglycerate (2-PG) into phosphoenolpyruvate (PEP). It is essential for the degradation of carbohydrates via glycolysis. The protein is Enolase of Sulfurimonas denitrificans (strain ATCC 33889 / DSM 1251) (Thiomicrospira denitrificans (strain ATCC 33889 / DSM 1251)).